The chain runs to 306 residues: Ribonuclease Z (306 aa).

Residues H63, H65, D67, H68, H142, D213, and H271 each coordinate Zn(2+). D67 (proton acceptor) is an active-site residue.

Belongs to the RNase Z family. In terms of assembly, homodimer. Zn(2+) is required as a cofactor.

The catalysed reaction is Endonucleolytic cleavage of RNA, removing extra 3' nucleotides from tRNA precursor, generating 3' termini of tRNAs. A 3'-hydroxy group is left at the tRNA terminus and a 5'-phosphoryl group is left at the trailer molecule.. Its function is as follows. Zinc phosphodiesterase, which displays some tRNA 3'-processing endonuclease activity. Probably involved in tRNA maturation, by removing a 3'-trailer from precursor tRNA. The sequence is that of Ribonuclease Z from Oceanobacillus iheyensis (strain DSM 14371 / CIP 107618 / JCM 11309 / KCTC 3954 / HTE831).